The following is a 463-amino-acid chain: MAALRVLCGLRGVAAQVLRPGAGVRLPIQPSRGVRQWQPDVEWAQQFGGAVMYPSKETAHWKPPPWNDVDPPKDTIVKNMTLNFGPQHPAAHGVLRLVMELSGEMVRKCDPHIGLLHRGTEKLIEYKTYLQALPYFDRLDYVSMMCNEQAYSLAVEKLLNIRPPPRAQWIRVLFGEITRLLNHIMAVTTHALDLGAMTPFFWLFEEREKMFEFYERVSGARMHAAYIRPGGVHQDLPLGLMDDIYQFSKNFSLRLDELEELLTNNRIWRNRTIDIGVVTAEEALNYGFSGVMLRGSGIQWDLRKTQPYDVYDQVEFDVPVGSRGDCYDRYLCRVEEMRQSLRIIAQCLNKMPPGEIKVDDAKVSPPKRAEMKTSMESLIHHFKLYTEGYQVPPGATYTAIEAPKGEFGVYLVSDGSSRPYRCKIKAPGFAHLAGLDKMSKGHMLADVVAIIGTQDIVFGEVDR.

The transit peptide at 1–33 directs the protein to the mitochondrion; it reads MAALRVLCGLRGVAAQVLRPGAGVRLPIQPSRG. Position 62 is an N6-acetyllysine (Lys62). The residue at position 118 (Arg118) is a Symmetric dimethylarginine. 3 residues coordinate [4Fe-4S] cluster: Cys326, Cys332, and Cys347.

It belongs to the complex I 49 kDa subunit family. As to quaternary structure, core subunit of respiratory chain NADH dehydrogenase (Complex I) which is composed of 45 different subunits. Component of the iron-sulfur (IP) fragment of the enzyme. Interacts with NDUFAF3. Interacts with NDUFAF7. Interacts with CERS2. Requires [4Fe-4S] cluster as cofactor. In terms of processing, dimethylation at Arg-118 by NDUFAF7 takes place after NDUFS2 assembles into the complex I, leading to stabilize the early intermediate complex.

It is found in the mitochondrion inner membrane. The enzyme catalyses a ubiquinone + NADH + 5 H(+)(in) = a ubiquinol + NAD(+) + 4 H(+)(out). Its function is as follows. Core subunit of the mitochondrial membrane respiratory chain NADH dehydrogenase (Complex I) which catalyzes electron transfer from NADH through the respiratory chain, using ubiquinone as an electron acceptor. Essential for the catalytic activity and assembly of complex I. Redox-sensitive, critical component of the oxygen-sensing pathway in the pulmonary vasculature which plays a key role in acute pulmonary oxygen-sensing and hypoxic pulmonary vasoconstriction. Plays an important role in carotid body sensing of hypoxia. Essential for glia-like neural stem and progenitor cell proliferation, differentiation and subsequent oligodendrocyte or neuronal maturation. In Gorilla gorilla gorilla (Western lowland gorilla), this protein is NADH dehydrogenase [ubiquinone] iron-sulfur protein 2, mitochondrial (NDUFS2).